Consider the following 249-residue polypeptide: Probable transcriptional regulatory protein Sfum_0996 (249 aa).

This sequence belongs to the TACO1 family.

Its subcellular location is the cytoplasm. This is Probable transcriptional regulatory protein Sfum_0996 from Syntrophobacter fumaroxidans (strain DSM 10017 / MPOB).